Here is a 246-residue protein sequence, read N- to C-terminus: tRNA (guanine-N(1)-)-methyltransferase (246 aa).

S-adenosyl-L-methionine contacts are provided by residues glycine 113 and 133 to 138; that span reads IGDFVM.

The protein belongs to the RNA methyltransferase TrmD family. In terms of assembly, homodimer.

It localises to the cytoplasm. The catalysed reaction is guanosine(37) in tRNA + S-adenosyl-L-methionine = N(1)-methylguanosine(37) in tRNA + S-adenosyl-L-homocysteine + H(+). In terms of biological role, specifically methylates guanosine-37 in various tRNAs. In Vibrio atlanticus (strain LGP32) (Vibrio splendidus (strain Mel32)), this protein is tRNA (guanine-N(1)-)-methyltransferase.